The primary structure comprises 171 residues: CDP-archaeol synthase (171 aa).

A run of 5 helical transmembrane segments spans residues 7-27, 55-75, 84-104, 115-135, and 141-161; these read MFWALWYILPAYFANASPVLL, FLGGVSVGTLVGVLQYYLTPA, VLLAFLLSFGALMGDLVGSFI, PAVGLDQLGFLISALAFAYPV, and GQMLFLLIFTPLVHWGANYFA.

This sequence belongs to the CDP-archaeol synthase family. Requires Mg(2+) as cofactor.

The protein localises to the cell membrane. It catalyses the reaction 2,3-bis-O-(geranylgeranyl)-sn-glycerol 1-phosphate + CTP + H(+) = CDP-2,3-bis-O-(geranylgeranyl)-sn-glycerol + diphosphate. Its pathway is membrane lipid metabolism; glycerophospholipid metabolism. Functionally, catalyzes the formation of CDP-2,3-bis-(O-geranylgeranyl)-sn-glycerol (CDP-archaeol) from 2,3-bis-(O-geranylgeranyl)-sn-glycerol 1-phosphate (DGGGP) and CTP. This reaction is the third ether-bond-formation step in the biosynthesis of archaeal membrane lipids. The protein is CDP-archaeol synthase of Thermococcus gammatolerans (strain DSM 15229 / JCM 11827 / EJ3).